The primary structure comprises 537 residues: Hydroxylamine reductase (537 aa).

Cys-3, Cys-6, Cys-15, and Cys-21 together coordinate [4Fe-4S] cluster. 8 residues coordinate hybrid [4Fe-2O-2S] cluster: His-239, Glu-263, Cys-307, Cys-393, Cys-421, Cys-446, Glu-480, and Lys-482. Residue Cys-393 is modified to Cysteine persulfide.

The protein belongs to the HCP family. [4Fe-4S] cluster is required as a cofactor. The cofactor is hybrid [4Fe-2O-2S] cluster.

Its subcellular location is the cytoplasm. It catalyses the reaction A + NH4(+) + H2O = hydroxylamine + AH2 + H(+). Functionally, catalyzes the reduction of hydroxylamine to form NH(3) and H(2)O. The protein is Hydroxylamine reductase of Lawsonia intracellularis (strain PHE/MN1-00).